Reading from the N-terminus, the 70-residue chain is U2-agatoxin-Ao1l (70 aa).

An N-terminal signal peptide occupies residues 1-20 (MRAIISLLLISAMVFSIIEA). The propeptide occupies 21-34 (VPEEEGLQLSEDER). 3 disulfide bridges follow: Cys-37–Cys-53, Cys-44–Cys-58, and Cys-52–Cys-68. Leu-69 is modified (leucine amide).

It belongs to the neurotoxin 01 (U2-agtx) family. In terms of tissue distribution, expressed by the venom gland.

It localises to the secreted. Functionally, insect active toxin causing rapid but reversible paralysis in crickets. No activity shown in mammals. Does not show effect on mammalian voltage-gated calcium channels. In Agelena orientalis (Funnel-web spider), this protein is U2-agatoxin-Ao1l.